Here is a 304-residue protein sequence, read N- to C-terminus: Probable 5-dehydro-4-deoxyglucarate dehydratase (304 aa).

Belongs to the DapA family.

The enzyme catalyses 5-dehydro-4-deoxy-D-glucarate + H(+) = 2,5-dioxopentanoate + CO2 + H2O. Its pathway is carbohydrate acid metabolism; D-glucarate degradation; 2,5-dioxopentanoate from D-glucarate: step 2/2. The protein is Probable 5-dehydro-4-deoxyglucarate dehydratase of Rhodococcus opacus (strain B4).